We begin with the raw amino-acid sequence, 285 residues long: Ribosomal RNA small subunit methyltransferase I (285 aa).

This sequence belongs to the methyltransferase superfamily. RsmI family.

The protein localises to the cytoplasm. The catalysed reaction is cytidine(1402) in 16S rRNA + S-adenosyl-L-methionine = 2'-O-methylcytidine(1402) in 16S rRNA + S-adenosyl-L-homocysteine + H(+). Catalyzes the 2'-O-methylation of the ribose of cytidine 1402 (C1402) in 16S rRNA. The protein is Ribosomal RNA small subunit methyltransferase I of Mycobacterium tuberculosis (strain ATCC 25618 / H37Rv).